Here is a 338-residue protein sequence, read N- to C-terminus: tRNA N6-adenosine threonylcarbamoyltransferase (338 aa).

Residues His-110 and His-114 each contribute to the Fe cation site. Substrate contacts are provided by residues 132–136, Asp-165, Gly-178, and Asn-274; that span reads LLSGG. Residue Asp-298 coordinates Fe cation.

It belongs to the KAE1 / TsaD family. It depends on Fe(2+) as a cofactor.

It is found in the cytoplasm. The catalysed reaction is L-threonylcarbamoyladenylate + adenosine(37) in tRNA = N(6)-L-threonylcarbamoyladenosine(37) in tRNA + AMP + H(+). Required for the formation of a threonylcarbamoyl group on adenosine at position 37 (t(6)A37) in tRNAs that read codons beginning with adenine. Is involved in the transfer of the threonylcarbamoyl moiety of threonylcarbamoyl-AMP (TC-AMP) to the N6 group of A37, together with TsaE and TsaB. TsaD likely plays a direct catalytic role in this reaction. The sequence is that of tRNA N6-adenosine threonylcarbamoyltransferase from Borrelia garinii subsp. bavariensis (strain ATCC BAA-2496 / DSM 23469 / PBi) (Borreliella bavariensis).